Consider the following 464-residue polypeptide: Argininosuccinate lyase (464 aa).

This sequence belongs to the lyase 1 family. Argininosuccinate lyase subfamily.

It localises to the cytoplasm. The enzyme catalyses 2-(N(omega)-L-arginino)succinate = fumarate + L-arginine. Its pathway is amino-acid biosynthesis; L-arginine biosynthesis; L-arginine from L-ornithine and carbamoyl phosphate: step 3/3. This Crocosphaera subtropica (strain ATCC 51142 / BH68) (Cyanothece sp. (strain ATCC 51142)) protein is Argininosuccinate lyase.